Here is a 225-residue protein sequence, read N- to C-terminus: tRNA (guanine-N(1)-)-methyltransferase (225 aa).

S-adenosyl-L-methionine-binding positions include Gly-112 and 132 to 137; that span reads IGDYVL.

This sequence belongs to the RNA methyltransferase TrmD family. As to quaternary structure, homodimer.

It is found in the cytoplasm. It catalyses the reaction guanosine(37) in tRNA + S-adenosyl-L-methionine = N(1)-methylguanosine(37) in tRNA + S-adenosyl-L-homocysteine + H(+). Its function is as follows. Specifically methylates guanosine-37 in various tRNAs. In Porphyromonas gingivalis (strain ATCC 33277 / DSM 20709 / CIP 103683 / JCM 12257 / NCTC 11834 / 2561), this protein is tRNA (guanine-N(1)-)-methyltransferase.